The following is a 325-amino-acid chain: Helicase VP6-A (325 aa).

Disordered stretches follow at residues 1–122 (MLLA…GATG) and 185–230 (DLRR…EPAR). Basic and acidic residues-rich tracts occupy residues 8–18 (VIKRSSEELKQ), 32–54 (EGGK…KDGE), 61–79 (GQKE…DRRI), and 92–105 (LGER…RGDG). An ATP-binding site is contributed by lysine 106. The segment covering 106–122 (KVGGGGGDADAGVGATG) has biased composition (gly residues). Composition is skewed to basic and acidic residues over residues 185–203 (DLRR…ERGG) and 211–229 (HGDA…EEPA).

It belongs to the orbivirus VP6 family. In terms of assembly, homohexamer.

The protein resides in the virion. The enzyme catalyses ATP + H2O = ADP + phosphate + H(+). Functionally, ATP dependent RNA helicase essential for RNA packaging and viral transcription. Possesses ss- and dsRNA-binding capacity. In Bluetongue virus 17 (isolate USA) (BTV 17), this protein is Helicase VP6-A (Segment-9).